The following is a 453-amino-acid chain: Chromosomal replication initiator protein DnaA (453 aa).

Positions 1–74 (MKEKQFWNRI…GFEIYDAEIT (74 aa)) are domain I, interacts with DnaA modulators. A domain II region spans residues 74-113 (TPHYIFTKPQDTTSSQVEEATNLTLYNYSPKLVSIPYSDT). The interval 114-331 (GLKEKYTFDN…GAINDITLIA (218 aa)) is domain III, AAA+ region. Residues G158, G160, K161, and T162 each contribute to the ATP site. Positions 332–453 (RVKKIKDITI…EIESIKKKIK (122 aa)) are domain IV, binds dsDNA.

It belongs to the DnaA family. Oligomerizes as a right-handed, spiral filament on DNA at oriC.

Its subcellular location is the cytoplasm. Its function is as follows. Plays an essential role in the initiation and regulation of chromosomal replication. ATP-DnaA binds to the origin of replication (oriC) to initiate formation of the DNA replication initiation complex once per cell cycle. Binds the DnaA box (a 9 base pair repeat at the origin) and separates the double-stranded (ds)DNA. Forms a right-handed helical filament on oriC DNA; dsDNA binds to the exterior of the filament while single-stranded (ss)DNA is stabiized in the filament's interior. The ATP-DnaA-oriC complex binds and stabilizes one strand of the AT-rich DNA unwinding element (DUE), permitting loading of DNA polymerase. After initiation quickly degrades to an ADP-DnaA complex that is not apt for DNA replication. Binds acidic phospholipids. This chain is Chromosomal replication initiator protein DnaA, found in Streptococcus pneumoniae serotype 19F (strain G54).